The primary structure comprises 126 residues: Glycine cleavage system H protein (126 aa).

Positions 22–104 (VATIGITEYA…YEKAWMVKVE (83 aa)) constitute a Lipoyl-binding domain. Residue Lys-63 is modified to N6-lipoyllysine.

This sequence belongs to the GcvH family. As to quaternary structure, the glycine cleavage system is composed of four proteins: P, T, L and H. It depends on (R)-lipoate as a cofactor.

Its function is as follows. The glycine cleavage system catalyzes the degradation of glycine. The H protein shuttles the methylamine group of glycine from the P protein to the T protein. Functionally, is also involved in protein lipoylation via its role as an octanoyl/lipoyl carrier protein intermediate. This Staphylococcus aureus (strain JH1) protein is Glycine cleavage system H protein.